A 515-amino-acid polypeptide reads, in one-letter code: DNA-directed RNA polymerase subunit Rpo2N (515 aa).

The protein belongs to the RNA polymerase beta chain family. As to quaternary structure, part of the RNA polymerase complex.

It is found in the cytoplasm. The catalysed reaction is RNA(n) + a ribonucleoside 5'-triphosphate = RNA(n+1) + diphosphate. Its function is as follows. DNA-dependent RNA polymerase (RNAP) catalyzes the transcription of DNA into RNA using the four ribonucleoside triphosphates as substrates. The Rpo2 subunit (Rpo2N and Rpo2C in this organism) is implicated in DNA promoter recognition and in nucleotide binding. The polypeptide is DNA-directed RNA polymerase subunit Rpo2N (Methanothermobacter thermautotrophicus (strain Winter) (Methanobacterium thermoautotrophicum)).